Consider the following 1530-residue polypeptide: Synaptonemal complex protein 2 (1530 aa).

The span at 439 to 461 (EKSKSPKEFAKPSKYIKNSDKGN) shows a compositional bias: basic and acidic residues. A disordered region spans residues 439–480 (EKSKSPKEFAKPSKYIKNSDKGNRNNSQLEKTTPSKRKMSEA). Serine 457 and serine 465 each carry phosphoserine. Phosphothreonine is present on threonine 471. Residues serine 494, serine 519, serine 529, and serine 538 each carry the phosphoserine modification. The interval 496–555 (VLFSNTSIPPRRRRIKPPLQMTSSAEKPSVSQTSENRVDNAASLKSRSSEGRHRRDNIDK) is disordered. Over residues 515–530 (QMTSSAEKPSVSQTSE) the composition is skewed to polar residues. The segment covering 542–555 (RSSEGRHRRDNIDK) has biased composition (basic and acidic residues). The residue at position 619 (threonine 619) is a Phosphothreonine. Disordered regions lie at residues 653–676 (QKSS…KKEQ), 693–717 (HNQQ…SDWP), and 755–795 (DKNP…SKGK). Residues serine 660 and serine 664 each carry the phosphoserine modification. 2 stretches are compositionally biased toward polar residues: residues 695 to 713 (QQQN…NAKQ) and 755 to 764 (DKNPSASKNV). A Phosphoserine modification is found at serine 936. Threonine 938 is modified (phosphothreonine). Residues 962 to 1003 (QLIDYSRNKNVKNHKSGKSRSSLEKGQPSSKMTPSKNITKKM) are disordered. Positions 970–979 (KNVKNHKSGK) are enriched in basic residues. Residues 988-998 (QPSSKMTPSKN) are compositionally biased toward polar residues. Phosphoserine occurs at positions 1136, 1138, 1145, 1161, and 1177. Phosphothreonine is present on threonine 1189. Phosphoserine is present on residues serine 1204, serine 1234, serine 1253, serine 1295, and serine 1297. At threonine 1339 the chain carries Phosphothreonine.

The protein belongs to the SYCP2 family. Component of the lateral elements of synaptonemal complexes. Heterodimer with SYCP3. Interacts with SMC1A and SMC3. Interacts with TEX11. Post-translationally, phosphorylated.

It is found in the nucleus. The protein localises to the chromosome. In terms of biological role, major component of the axial/lateral elements of synaptonemal complexes (SCS) during meiotic prophase. Plays a role in the assembly of synaptonemal complexes. Required for normal meiotic chromosome synapsis during oocyte and spermatocyte development and for normal male and female fertility. Required for insertion of SYCP3 into synaptonemal complexes. May be involved in the organization of chromatin by temporarily binding to DNA scaffold attachment regions. Requires SYCP3, but not SYCP1, in order to be incorporated into the axial/lateral elements. This is Synaptonemal complex protein 2 (SYCP2) from Homo sapiens (Human).